A 115-amino-acid polypeptide reads, in one-letter code: Probable non-functional immunoglobulin heavy variable 3-38-3 (115 aa).

An N-terminal signal peptide occupies residues 1-19 (MQFVLSWVFLVAILKGVQC). Positions 20-44 (EVQLVESRGVLVQPGGSLRLSCAAS) are framework-1. Residues 31-115 (VQPGGSLRLS…EDTAVYYCKK (85 aa)) enclose the Ig-like domain. C41 and C113 are oxidised to a cystine. The segment at 45-52 (GFTVSSNE) is complementarity-determining-1. The tract at residues 53-69 (MSWVRQAPGKGLEWVSS) is framework-2. The tract at residues 70 to 75 (ISGGST) is complementarity-determining-2. A framework-3 region spans residues 76–113 (YYADSRKGRFTISRDNSKNTLHLQMNSLRAEDTAVYYC). The segment at 114–115 (KK) is complementarity-determining-3.

Immunoglobulins are composed of two identical heavy chains and two identical light chains; disulfide-linked.

The protein resides in the secreted. It is found in the cell membrane. Its function is as follows. Probable non-functional open reading frame (ORF) of V region of the variable domain of immunoglobulin heavy chains. Non-functional ORF generally cannot participate in the synthesis of a productive immunoglobulin chain due to altered V-(D)-J or switch recombination and/or splicing site (at mRNA level) and/or conserved amino acid change (protein level). Immunoglobulins, also known as antibodies, are membrane-bound or secreted glycoproteins produced by B lymphocytes. In the recognition phase of humoral immunity, the membrane-bound immunoglobulins serve as receptors which, upon binding of a specific antigen, trigger the clonal expansion and differentiation of B lymphocytes into immunoglobulins-secreting plasma cells. Secreted immunoglobulins mediate the effector phase of humoral immunity, which results in the elimination of bound antigens. The antigen binding site is formed by the variable domain of one heavy chain, together with that of its associated light chain. Thus, each immunoglobulin has two antigen binding sites with remarkable affinity for a particular antigen. The variable domains are assembled by a process called V-(D)-J rearrangement and can then be subjected to somatic hypermutations which, after exposure to antigen and selection, allow affinity maturation for a particular antigen. This is Probable non-functional immunoglobulin heavy variable 3-38-3 from Homo sapiens (Human).